We begin with the raw amino-acid sequence, 307 residues long: Aspartate carbamoyltransferase catalytic subunit (307 aa).

Carbamoyl phosphate is bound by residues Arg-54 and Thr-55. Lys-83 lines the L-aspartate pocket. Carbamoyl phosphate is bound by residues Arg-104, His-132, and Gln-135. Residues Arg-165 and Arg-228 each coordinate L-aspartate. Leu-267 and Pro-268 together coordinate carbamoyl phosphate.

Belongs to the aspartate/ornithine carbamoyltransferase superfamily. ATCase family. In terms of assembly, heterododecamer (2C3:3R2) of six catalytic PyrB chains organized as two trimers (C3), and six regulatory PyrI chains organized as three dimers (R2).

The catalysed reaction is carbamoyl phosphate + L-aspartate = N-carbamoyl-L-aspartate + phosphate + H(+). The protein operates within pyrimidine metabolism; UMP biosynthesis via de novo pathway; (S)-dihydroorotate from bicarbonate: step 2/3. Catalyzes the condensation of carbamoyl phosphate and aspartate to form carbamoyl aspartate and inorganic phosphate, the committed step in the de novo pyrimidine nucleotide biosynthesis pathway. This Clostridium botulinum (strain Eklund 17B / Type B) protein is Aspartate carbamoyltransferase catalytic subunit.